The following is a 303-amino-acid chain: MTASAPAASTSARLLDGRRIAEELLDGLKSRVDARLAAGKARPGLAVVLVGGDPASSVYVRNKRRAAEKVGIEAFDYDLPQCTSEAELAALIDELNADPKIHGILIQLPLPGIPDANRLIQRIDPRKDVDGFHPQNVGHLALREFGLRPCTPRGIVTLLSHTDQPVRGRNATIVGVSNHVGRPMGLELLIAGCTVTSCHKFTPPDVLEASVRNADILVVAVGRPGLIPGEWVKPGAVVIDVGINRLDDGRLVGDVGFDAAAQRAAWITPVPGGVGPMTVATLMQNTIEAADAAGIEGAGVGIR.

NADP(+) contacts are provided by residues 175-177 and I243; that span reads GVS.

Belongs to the tetrahydrofolate dehydrogenase/cyclohydrolase family. Homodimer.

It carries out the reaction (6R)-5,10-methylene-5,6,7,8-tetrahydrofolate + NADP(+) = (6R)-5,10-methenyltetrahydrofolate + NADPH. It catalyses the reaction (6R)-5,10-methenyltetrahydrofolate + H2O = (6R)-10-formyltetrahydrofolate + H(+). It functions in the pathway one-carbon metabolism; tetrahydrofolate interconversion. Its function is as follows. Catalyzes the oxidation of 5,10-methylenetetrahydrofolate to 5,10-methenyltetrahydrofolate and then the hydrolysis of 5,10-methenyltetrahydrofolate to 10-formyltetrahydrofolate. This is Bifunctional protein FolD from Xanthomonas oryzae pv. oryzae (strain PXO99A).